The following is a 695-amino-acid chain: UvrABC system protein B (695 aa).

The region spanning 25-176 is the Helicase ATP-binding domain; sequence KSILEGHRFQ…NQREVLRDLA (152 aa). 38–45 contacts ATP; sequence GATGTGKT. Positions 91–114 match the Beta-hairpin motif; that stretch reads YYDYYQPEAYVPSTDTYIAKSSSI. Positions 454–617 constitute a Helicase C-terminal domain; the sequence is LLGEIYLRLE…ITPKPIIKKN (164 aa). Residues 652–687 enclose the UVR domain; sequence PELIGQLELKMKAAAKNLEFEEAAQLRDQIKKLRQR.

Belongs to the UvrB family. As to quaternary structure, forms a heterotetramer with UvrA during the search for lesions. Interacts with UvrC in an incision complex.

The protein resides in the cytoplasm. Its function is as follows. The UvrABC repair system catalyzes the recognition and processing of DNA lesions. A damage recognition complex composed of 2 UvrA and 2 UvrB subunits scans DNA for abnormalities. Upon binding of the UvrA(2)B(2) complex to a putative damaged site, the DNA wraps around one UvrB monomer. DNA wrap is dependent on ATP binding by UvrB and probably causes local melting of the DNA helix, facilitating insertion of UvrB beta-hairpin between the DNA strands. Then UvrB probes one DNA strand for the presence of a lesion. If a lesion is found the UvrA subunits dissociate and the UvrB-DNA preincision complex is formed. This complex is subsequently bound by UvrC and the second UvrB is released. If no lesion is found, the DNA wraps around the other UvrB subunit that will check the other stand for damage. This Synechococcus sp. (strain JA-3-3Ab) (Cyanobacteria bacterium Yellowstone A-Prime) protein is UvrABC system protein B.